Reading from the N-terminus, the 322-residue chain is tRNA U34 carboxymethyltransferase (322 aa).

Carboxy-S-adenosyl-L-methionine contacts are provided by residues K90, W104, K109, G129, 151–153, 180–181, M196, Y200, and R315; these read DPS and IE.

The protein belongs to the class I-like SAM-binding methyltransferase superfamily. CmoB family. As to quaternary structure, homotetramer.

The catalysed reaction is carboxy-S-adenosyl-L-methionine + 5-hydroxyuridine(34) in tRNA = 5-carboxymethoxyuridine(34) in tRNA + S-adenosyl-L-homocysteine + H(+). In terms of biological role, catalyzes carboxymethyl transfer from carboxy-S-adenosyl-L-methionine (Cx-SAM) to 5-hydroxyuridine (ho5U) to form 5-carboxymethoxyuridine (cmo5U) at position 34 in tRNAs. In Cellvibrio japonicus (strain Ueda107) (Pseudomonas fluorescens subsp. cellulosa), this protein is tRNA U34 carboxymethyltransferase.